The primary structure comprises 799 residues: MDVADLPGVPEWLPDHLRDDGIEELYPPQAEAVEAGVTEGENLVASIPTASGKTLIAELAMLSSVARGGKALYIVPLRALASEKQADFEEFEQYGLDIGVSTGNYESEGGWLADKDIVVATSEKVDSLVRNDAPWIEDLTCVVTDEVHLVDDGERGPTLEVTLAKLRRLNPDLQTVALSATIGNAEALATWLDAGLVDSDWRPIDLQKGVHYGQALHLEDGSQQRLSVQNNEKQTAAIVRDTLEDDGSTLVFVNSRRNAEAAAGRLANTVRPHLSTEERDQLADIAEEIRDVSDTETSDDLADAVADGAAFHHAGLSRGHRELVEDAFRDRLVKVVCATPTLAAGVNTPSRRVVVRDWRRYDGSAGGMAPLSVLEVHQMMGRAGRPGLDPYGEAVLIASSHDEVDELFERYVWADPEPVRSKLAAEPALRTHILATVASGFARSRKGLLEFLEQTLYASQTDDSGQLERVVDDVLTYLQRNDFLEIEAGELDATSLGHTVSRLYLDPMSAAEIVDGLRDWERGASDSTSASGSPADAQAEPPANSGFTTASELAEDADESDADRDPDDISALGLYHLVSRTPDMYQLYLRSGDREEYEMELFEREEELLGPTPSEFEEGRFEDWLSALKTARLLEDWATEVDEATITDRYGVGPGDIRGKVETAQWLLGAAESLASEVDLDAARAISEARIRVEHGVREELVDLAGVRGVGRKRARRLFQAGITDRAQLRDADKAVVLAALRGRRKTAENVLENAGHRDPSMEGVEPAPDVSVDLNDGADGDASAESTANDDQASLGDF.

Residues Gln-29 and 47-54 contribute to the ATP site; that span reads IPTASGKT. The Helicase ATP-binding domain maps to 34 to 200; sequence EAGVTEGENL…WLDAGLVDSD (167 aa). The DEAH box motif lies at 145 to 148; that stretch reads DEVH. Residues 234–435 enclose the Helicase C-terminal domain; sequence QTAAIVRDTL…EPALRTHILA (202 aa). Disordered regions lie at residues 522–566 and 750–799; these read RGAS…DRDP and NVLE…LGDF. Over residues 553–566 the composition is skewed to acidic residues; the sequence is LAEDADESDADRDP.

This sequence belongs to the helicase family. Hel308 subfamily. In terms of assembly, monomer.

It catalyses the reaction Couples ATP hydrolysis with the unwinding of duplex DNA by translocating in the 3'-5' direction.. It carries out the reaction ATP + H2O = ADP + phosphate + H(+). Its function is as follows. DNA-dependent ATPase and 3'-5' DNA helicase that may be involved in repair of stalled replication forks. The protein is ATP-dependent DNA helicase Hel308 of Haloarcula marismortui (strain ATCC 43049 / DSM 3752 / JCM 8966 / VKM B-1809) (Halobacterium marismortui).